Here is a 76-residue protein sequence, read N- to C-terminus: Beta-defensin 121 (76 aa).

The first 15 residues, 1 to 15 (MKLLLLLLTVTLLLA), serve as a signal peptide directing secretion. Cystine bridges form between cysteine 23/cysteine 50, cysteine 30/cysteine 44, and cysteine 34/cysteine 51.

The protein belongs to the beta-defensin family. In terms of tissue distribution, abundant expression in the male reproductive tract only.

It is found in the secreted. In terms of biological role, has antibacterial activity. The protein is Beta-defensin 121 (DEFB121) of Macaca mulatta (Rhesus macaque).